A 613-amino-acid chain; its full sequence is MGQKGHKDSLYPCGGTPESSLHEALDQCMTALDLFLTNQFSEALSYLKPRTKESMYHSLTYATILEMQAMMTFDPQDILLAGNMMKEAQMLCQRHRRKSSVTDSFSSLVNRPTLGQFTEEEIHAEVCYAECLLQRAALTFLQGSSHGGAVRPRALHDPSHACSCPPGPGRQHLFLLQDENMVSFIKGGIKVRNSYQTYKELDSLVQSSQYCKGENHPHFEGGVKLGVGAFNLTLSMLPTRILRLLEFVGFSGNKDYGLLQLEEGASGHSFRSVLCVMLLLCYHTFLTFVLGTGNVNIEEAEKLLKPYLNRYPKGAIFLFFAGRIEVIKGNIDAAIRRFEECCEAQQHWKQFHHMCYWELMWCFTYKGQWKMSYFYADLLSKENCWSKATYIYMKAAYLSMFGKEDHKPFGDDEVELFRAVPGLKLKIAGKSLPTEKFAIRKSRRYFSSNPISLPVPALEMMYIWNGYAVIGKQPKLTDGILEIITKAEEMLEKGPENEYSVDDECLVKLLKGLCLKYLGRVQEAEENFRSISANEKKIKYDHYLIPNALLELALLLMEQDRNEEAIKLLESAKQNYKNYSMESRTHFRIQAATLQAKSSLENSSRSMVSSVSL.

3 TPR repeats span residues 315 to 348, 505 to 538, and 546 to 579; these read AIFLFFAGRIEVIKGNIDAAIRRFEECCEAQQHW, CLVKLLKGLCLKYLGRVQEAEENFRSISANEKKI, and PNALLELALLLMEQDRNEEAIKLLESAKQNYKNY.

The protein belongs to the TTC39 family.

In Homo sapiens (Human), this protein is Tetratricopeptide repeat protein 39A (TTC39A).